Here is a 200-residue protein sequence, read N- to C-terminus: MASSSHNNLNAKLVLLGDMGAGKSSLVIRFVKGQFLEFQESTIGAAFFSSTLAVNNATVKFEIWDTAGQERYHSLAPMYYRGAAAAIIVYDITSSDSFARAKKWVQELQKQGNPNMVMALAGNKADLEDRRKVTAEEARLYAEENGLFFMETSAKTAVNVNAIFYEIAKRLPRAQPAQNPAGMVLVDRAAEGTRATSCCT.

Residues Gly-17–Ser-25, Leu-36–Thr-42, Asp-65–Gln-69, Asn-123–Asp-126, and Ser-153–Lys-155 each bind GTP. The Effector region signature appears at Gln-39–Phe-47. Residues Cys-198 and Cys-199 are each lipidated (S-geranylgeranyl cysteine).

Belongs to the small GTPase superfamily. Rab family. High in stem, root, and inflorescence.

Its subcellular location is the cell membrane. Functionally, protein transport. Probably involved in vesicular traffic. This chain is Ras-related protein RHN1 (RHN1), found in Nicotiana plumbaginifolia (Leadwort-leaved tobacco).